The following is a 206-amino-acid chain: MARYLGPKLKLSRREGTDLFLKSGVRAIDTKCKIEQAPGQHGARKPRLSDYGVQLREKQKVRRMYGVLERQFRNYYKEAARLKGNTGENLLALLEGRLDNVVYRMGFGATRAEARQLVSHKAIMVNGRVVNIASYQVKANDVVSIREKAKKQSRVKAALELAEQREKPTWLEVDAGKMEGTFKRQPERSDLSADINEHLIVELYSK.

In terms of domain architecture, S4 RNA-binding spans 96–156; the sequence is GRLDNVVYRM…EKAKKQSRVK (61 aa).

It belongs to the universal ribosomal protein uS4 family. In terms of assembly, part of the 30S ribosomal subunit. Contacts protein S5. The interaction surface between S4 and S5 is involved in control of translational fidelity.

One of the primary rRNA binding proteins, it binds directly to 16S rRNA where it nucleates assembly of the body of the 30S subunit. Its function is as follows. With S5 and S12 plays an important role in translational accuracy. This Klebsiella pneumoniae (strain 342) protein is Small ribosomal subunit protein uS4.